The chain runs to 302 residues: Acetylglutamate kinase (302 aa).

Residues 68–69, R90, and N194 contribute to the substrate site; that span reads GG.

It belongs to the acetylglutamate kinase family. ArgB subfamily.

Its subcellular location is the cytoplasm. The enzyme catalyses N-acetyl-L-glutamate + ATP = N-acetyl-L-glutamyl 5-phosphate + ADP. It functions in the pathway amino-acid biosynthesis; L-arginine biosynthesis; N(2)-acetyl-L-ornithine from L-glutamate: step 2/4. In terms of biological role, catalyzes the ATP-dependent phosphorylation of N-acetyl-L-glutamate. This is Acetylglutamate kinase from Acinetobacter baumannii (strain AB307-0294).